Reading from the N-terminus, the 402-residue chain is Odorant receptor 22c (402 aa).

Residues 1–42 lie on the Cytoplasmic side of the membrane; the sequence is MTDSGQPAIADHFYRIPRISGLIVGLWPQRIRGGGGRPWHAH. The helical transmembrane segment at 43 to 63 threads the bilayer; the sequence is LLFVFAFAMVVVGAVGEVSYG. At 64–73 the chain is on the extracellular side; the sequence is CVHLDNLVVA. The chain crosses the membrane as a helical span at residues 74–94; it reads LEAFCPGTTKAVCVLKLWVFF. Topologically, residues 95–134 are cytoplasmic; sequence RSNRRWAELVQRLRAILWESRRQEAQRMLVGLATTANRLS. A helical membrane pass occupies residues 135 to 155; sequence LLLLSSGTATNAAFTLQPLIM. Over 156 to 173 the chain is Extracellular; sequence GLYRWIVQLPGQTELPFN. Residues 174–194 traverse the membrane as a helical segment; it reads IILPSFAVQPGVFPLTYVLLT. Topologically, residues 195–201 are cytoplasmic; it reads ASGACTV. Residues 202 to 222 form a helical membrane-spanning segment; the sequence is FAFSFVDGFFICSCLYICGAF. Topologically, residues 223–276 are extracellular; the sequence is RLVQQDIRRIFADLHGDSVDVFTEEMNAEVRHRLAQVVERHNAIIDFCTDLTRQ. A helical membrane pass occupies residues 277–297; sequence FTVIVLMHFLSAAFVLCSTIL. Topologically, residues 298-307 are cytoplasmic; it reads DIMLNTSSLS. Residues 308 to 328 traverse the membrane as a helical segment; that stretch reads GLTYICYIIAALTQLFLYCFG. The Extracellular segment spans residues 329 to 402; that stretch reads GNHVSESSAA…SYITLLKTFL (74 aa).

It belongs to the insect chemoreceptor superfamily. Heteromeric odorant receptor channel (TC 1.A.69) family. Or1a subfamily. Interacts with Orco. Complexes exist early in the endomembrane system in olfactory sensory neurons (OSNs), coupling these complexes to the conserved ciliary trafficking pathway. Not expressed in either the antenna or maxillary palp.

The protein localises to the cell membrane. Functionally, odorant receptor which mediates acceptance or avoidance behavior, depending on its substrates. The odorant receptor repertoire encodes a large collection of odor stimuli that vary widely in identity, intensity, and duration. May form a complex with Orco to form odorant-sensing units, providing sensitive and prolonged odorant signaling and calcium permeability. This chain is Odorant receptor 22c (Or22c), found in Drosophila melanogaster (Fruit fly).